A 176-amino-acid chain; its full sequence is Replication restart protein PriC (176 aa).

The protein belongs to the PriC family. Component of the replication restart primosome, which is composed of PriA, PriB, PriC, DnaB and DnaT; DnaG primase associates transiently with this complex. Interacts with the C-terminus of SSB; this interaction is required to load the main replicative helicase onto substrate replication forks. Interacts with helicase DnaB alone and in the DnaB-DnaC complex, probably 1:1 binding with DnaB. Interacts with DnaT.

Involved in the restart of stalled replication forks, which reloads the DnaB replicative helicase on sites other than the origin of replication. Recognizes abandoned replication forks and remodels DNA single-stranded binding protein (SSB) on ssDNA to uncover a loading site for DnaB. There are several restart pathways, the PriA-PriC pathway is a minor restart pathway. Part of the minor PriC-Rep pathway for restart of stalled replication forks, which has a different substrate specificity than PriA. Part of the major restart pathway with PriA, PriB, DnaB, DnaT and DnaG primase. priB and priC have redundant roles in the cell. Binds 7-9 nucleotides of single-stranded (ss)DNA. The protein is Replication restart protein PriC of Klebsiella pneumoniae subsp. pneumoniae (strain ATCC 700721 / MGH 78578).